A 164-amino-acid chain; its full sequence is 6,7-dimethyl-8-ribityllumazine synthase (164 aa).

5-amino-6-(D-ribitylamino)uracil-binding positions include Phe-22, 56–58 (AWE), and 80–82 (AVI). Position 85–86 (85–86 (DT)) interacts with (2S)-2-hydroxy-3-oxobutyl phosphate. His-88 functions as the Proton donor in the catalytic mechanism. Leu-113 is a 5-amino-6-(D-ribitylamino)uracil binding site. Arg-127 serves as a coordination point for (2S)-2-hydroxy-3-oxobutyl phosphate.

It belongs to the DMRL synthase family.

It catalyses the reaction (2S)-2-hydroxy-3-oxobutyl phosphate + 5-amino-6-(D-ribitylamino)uracil = 6,7-dimethyl-8-(1-D-ribityl)lumazine + phosphate + 2 H2O + H(+). It functions in the pathway cofactor biosynthesis; riboflavin biosynthesis; riboflavin from 2-hydroxy-3-oxobutyl phosphate and 5-amino-6-(D-ribitylamino)uracil: step 1/2. Functionally, catalyzes the formation of 6,7-dimethyl-8-ribityllumazine by condensation of 5-amino-6-(D-ribitylamino)uracil with 3,4-dihydroxy-2-butanone 4-phosphate. This is the penultimate step in the biosynthesis of riboflavin. The sequence is that of 6,7-dimethyl-8-ribityllumazine synthase from Gemmatimonas aurantiaca (strain DSM 14586 / JCM 11422 / NBRC 100505 / T-27).